We begin with the raw amino-acid sequence, 216 residues long: Ribosomal RNA small subunit methyltransferase G (216 aa).

S-adenosyl-L-methionine-binding positions include Gly-83, Met-88, 134–135, and Arg-149; that span reads VE.

The protein belongs to the methyltransferase superfamily. RNA methyltransferase RsmG family.

The protein localises to the cytoplasm. It catalyses the reaction guanosine(527) in 16S rRNA + S-adenosyl-L-methionine = N(7)-methylguanosine(527) in 16S rRNA + S-adenosyl-L-homocysteine. Functionally, specifically methylates the N7 position of guanine in position 527 of 16S rRNA. This is Ribosomal RNA small subunit methyltransferase G from Pseudomonas entomophila (strain L48).